A 339-amino-acid polypeptide reads, in one-letter code: Fructose-1,6-bisphosphatase class 1 (339 aa).

Mg(2+) is bound by residues Glu-91, Asp-113, Leu-115, and Asp-116. Residues 116–119 (DGSS), Asn-210, and Lys-276 each bind substrate. Glu-282 contacts Mg(2+).

Belongs to the FBPase class 1 family. In terms of assembly, homotetramer. Mg(2+) serves as cofactor.

The protein resides in the cytoplasm. The catalysed reaction is beta-D-fructose 1,6-bisphosphate + H2O = beta-D-fructose 6-phosphate + phosphate. It participates in carbohydrate biosynthesis; gluconeogenesis. This Bordetella bronchiseptica (strain ATCC BAA-588 / NCTC 13252 / RB50) (Alcaligenes bronchisepticus) protein is Fructose-1,6-bisphosphatase class 1.